The following is a 498-amino-acid chain: Lysine--tRNA ligase (498 aa).

Mg(2+)-binding residues include Glu407 and Glu414.

This sequence belongs to the class-II aminoacyl-tRNA synthetase family. In terms of assembly, homodimer. Mg(2+) is required as a cofactor.

The protein resides in the cytoplasm. The enzyme catalyses tRNA(Lys) + L-lysine + ATP = L-lysyl-tRNA(Lys) + AMP + diphosphate. This Rhizobium etli (strain ATCC 51251 / DSM 11541 / JCM 21823 / NBRC 15573 / CFN 42) protein is Lysine--tRNA ligase.